A 284-amino-acid polypeptide reads, in one-letter code: Bifunctional protein FolD (284 aa).

Residues 166–168 (GAS) and I232 each bind NADP(+).

Belongs to the tetrahydrofolate dehydrogenase/cyclohydrolase family. Homodimer.

It catalyses the reaction (6R)-5,10-methylene-5,6,7,8-tetrahydrofolate + NADP(+) = (6R)-5,10-methenyltetrahydrofolate + NADPH. It carries out the reaction (6R)-5,10-methenyltetrahydrofolate + H2O = (6R)-10-formyltetrahydrofolate + H(+). It participates in one-carbon metabolism; tetrahydrofolate interconversion. Its function is as follows. Catalyzes the oxidation of 5,10-methylenetetrahydrofolate to 5,10-methenyltetrahydrofolate and then the hydrolysis of 5,10-methenyltetrahydrofolate to 10-formyltetrahydrofolate. The polypeptide is Bifunctional protein FolD (Shewanella sp. (strain W3-18-1)).